Reading from the N-terminus, the 336-residue chain is Biotin synthase (336 aa).

In terms of domain architecture, Radical SAM core spans 52–279 (KAIQLSTLMS…KSYVRLSAGR (228 aa)). The [4Fe-4S] cluster site is built by cysteine 67, cysteine 71, and cysteine 74. [2Fe-2S] cluster is bound by residues cysteine 111, cysteine 142, cysteine 202, and arginine 274.

Belongs to the radical SAM superfamily. Biotin synthase family. In terms of assembly, homodimer. [4Fe-4S] cluster is required as a cofactor. The cofactor is [2Fe-2S] cluster.

It catalyses the reaction (4R,5S)-dethiobiotin + (sulfur carrier)-SH + 2 reduced [2Fe-2S]-[ferredoxin] + 2 S-adenosyl-L-methionine = (sulfur carrier)-H + biotin + 2 5'-deoxyadenosine + 2 L-methionine + 2 oxidized [2Fe-2S]-[ferredoxin]. Its pathway is cofactor biosynthesis; biotin biosynthesis; biotin from 7,8-diaminononanoate: step 2/2. In terms of biological role, catalyzes the conversion of dethiobiotin (DTB) to biotin by the insertion of a sulfur atom into dethiobiotin via a radical-based mechanism. The protein is Biotin synthase of Pasteurella multocida (strain Pm70).